Here is a 246-residue protein sequence, read N- to C-terminus: Small ribosomal subunit protein uS2 (246 aa).

This sequence belongs to the universal ribosomal protein uS2 family.

The chain is Small ribosomal subunit protein uS2 from Saccharophagus degradans (strain 2-40 / ATCC 43961 / DSM 17024).